The primary structure comprises 455 residues: DNA repair protein RadA (455 aa).

The C4-type zinc finger occupies 12 to 29 (CSECGSYSPKWLGQCPGC). 95 to 102 (GEPGIGKS) lines the ATP pocket. Positions 252 to 256 (KNRFG) match the RadA KNRFG motif motif. The lon-protease-like stretch occupies residues 351–455 (DVFLSIAGGL…TIKDAVRLLQ (105 aa)).

It belongs to the RecA family. RadA subfamily.

Functionally, DNA-dependent ATPase involved in processing of recombination intermediates, plays a role in repairing DNA breaks. Stimulates the branch migration of RecA-mediated strand transfer reactions, allowing the 3' invading strand to extend heteroduplex DNA faster. Binds ssDNA in the presence of ADP but not other nucleotides, has ATPase activity that is stimulated by ssDNA and various branched DNA structures, but inhibited by SSB. Does not have RecA's homology-searching function. This is DNA repair protein RadA from Chlamydia muridarum (strain MoPn / Nigg).